Here is a 342-residue protein sequence, read N- to C-terminus: Dihydroorotate dehydrogenase (quinone) (342 aa).

FMN is bound by residues Ala61–Lys65 and Thr85. Residue Lys65 participates in substrate binding. Asn110 to Phe114 is a substrate binding site. FMN-binding residues include Asn138 and Asn171. Asn171 contributes to the substrate binding site. The active-site Nucleophile is the Ser174. Asn176 lines the substrate pocket. FMN contacts are provided by Lys216 and Thr244. Asn245–Thr246 lines the substrate pocket. FMN contacts are provided by residues Gly267, Gly296, and Tyr317–Ser318.

This sequence belongs to the dihydroorotate dehydrogenase family. Type 2 subfamily. As to quaternary structure, monomer. Requires FMN as cofactor.

The protein localises to the cell membrane. It carries out the reaction (S)-dihydroorotate + a quinone = orotate + a quinol. The protein operates within pyrimidine metabolism; UMP biosynthesis via de novo pathway; orotate from (S)-dihydroorotate (quinone route): step 1/1. Functionally, catalyzes the conversion of dihydroorotate to orotate with quinone as electron acceptor. The sequence is that of Dihydroorotate dehydrogenase (quinone) from Cellvibrio japonicus (strain Ueda107) (Pseudomonas fluorescens subsp. cellulosa).